We begin with the raw amino-acid sequence, 109 residues long: Protein GOLVEN 5 (109 aa).

A signal peptide spans 1 to 24 (MTNITSSFLCLLILLLFCLSFGYS). The propeptide occupies 25-96 (LHGDKDEVLS…EEDDLVAYTA (72 aa)). Residues 54–88 (KKAQVRGRSGQEFSKETTKMMMKKTTKKETNVEEE) are disordered. Tyr98 carries the post-translational modification Sulfotyrosine. Pro106 is modified (hydroxyproline).

It belongs to the RGF family. In terms of assembly, binds to LRR receptor-like serine/threonine-protein kinases RGI1, RGI2 and RGI3 to trigger their dimerization with SERK proteins and subsequent signaling. In terms of tissue distribution, expressed in root tips.

The protein resides in the secreted. In terms of biological role, signaling peptide (root growth factor) that maintains the postembryonic root stem cell niche in a PIN2-traffic dependent manner. Root growth factor that regulates the pattern of root growth and lateral root development by modulating the length and the number of cortical cells in the root apical meristem (RAM), and the anticlinal asymmetric cell divisions in lateral root initiation cells. Influences the longitudinal growth rate in the primary root in response to phosphate ion (Pi)-deprivation. The polypeptide is Protein GOLVEN 5 (Arabidopsis thaliana (Mouse-ear cress)).